The chain runs to 962 residues: AP2-associated protein kinase 1 (962 aa).

An N-acetylmethionine modification is found at Met-1. A compositionally biased stretch (basic and acidic residues) spans 1 to 11; it reads MKKFFDSRREQ. The disordered stretch occupies residues 1-27; it reads MKKFFDSRREQGSSGLGSGSSGGGGSS. Ser-14 carries the phosphoserine modification. The segment covering 14 to 27 has biased composition (gly residues); sequence SGLGSGSSGGGGSS. The Protein kinase domain occupies 46 to 314; that stretch reads VTVDEVLAEG…QVSYFSFKLL (269 aa). ATP-binding positions include 52 to 60 and Lys-74; that span reads LAEGGFALV. Asp-176 functions as the Proton acceptor in the catalytic mechanism. Tyr-234 is modified (phosphotyrosine). Ser-235 is modified (phosphoserine). Disordered stretches follow at residues 325–515 and 576–633; these read NSPI…QFQA and PQAQ…RAGH. 2 positions are modified to phosphothreonine: Thr-353 and Thr-388. Residue Arg-390 is modified to Omega-N-methylarginine. Over residues 397–418 the composition is skewed to polar residues; that stretch reads PLPQATGPSNQPSLLASVSQPK. Residues 419 to 434 show a composition bias toward low complexity; sequence AQATPSQPLQSSQPKQ. Residues 435–444 are compositionally biased toward pro residues; it reads PQAPPTPQQT. Phosphothreonine is present on Thr-440. Composition is skewed to low complexity over residues 445–485, 498–514, and 576–606; these read PAPQ…QPQQ, QQQQ…QQFQ, and PQAQ…KVQT. At Thr-607 the chain carries Phosphothreonine. Residues 614 to 628 are compositionally biased toward polar residues; the sequence is GQKVGSLTPPSSPKT. The residue at position 619 (Ser-619) is a Phosphoserine. Thr-621 carries the post-translational modification Phosphothreonine. Residues Ser-624, Ser-625, Ser-638, and Ser-651 each carry the phosphoserine modification. At Thr-654 the chain carries Phosphothreonine. Residues 664–677 show a composition bias toward low complexity; it reads ASLSKSKSATTTPS. Residues 664–702 form a disordered region; sequence ASLSKSKSATTTPSGSPRTSQQNVSNASEGSTWNPFDDD. Over residues 678 to 697 the composition is skewed to polar residues; it reads GSPRTSQQNVSNASEGSTWN. A phosphoserine mark is found at Ser-732, Ser-847, Ser-938, and Ser-939. The interval 824–961 is clathrin-binding domain (CBD); the sequence is EKADAAVESL…SLLLVDQLID (138 aa). Disordered stretches follow at residues 839–860 and 925–946; these read PPVA…TDSL and LITK…ESSL. Residues 846–860 show a composition bias toward polar residues; it reads PSHTESVTSNRTDSL. Over residues 932–945 the composition is skewed to low complexity; the sequence is GGHSRNSSGSSESS.

The protein belongs to the protein kinase superfamily. Ser/Thr protein kinase family. In terms of assembly, interacts (via CBD domain) with clathrin. Interacts with AP-2 complex. Interacts with NUMB. Interacts with alpha-adaptin. Interacts with EPS15. Interacts with membrane-bound activated NOTCH1 but not with the inactive full-length form of NOTCH1. Preferentially interacts with monoubiquitinated activated NOTCH1 compared to the non-ubiquitinated form. Post-translationally, autophosphorylated.

The protein localises to the cell membrane. It is found in the membrane. The protein resides in the clathrin-coated pit. It localises to the presynapse. It carries out the reaction L-seryl-[protein] + ATP = O-phospho-L-seryl-[protein] + ADP + H(+). The catalysed reaction is L-threonyl-[protein] + ATP = O-phospho-L-threonyl-[protein] + ADP + H(+). With respect to regulation, stimulated by clathrin. Regulates clathrin-mediated endocytosis by phosphorylating the AP2M1/mu2 subunit of the adaptor protein complex 2 (AP-2) which ensures high affinity binding of AP-2 to cargo membrane proteins during the initial stages of endocytosis. Preferentially, may phosphorylate substrates on threonine residues. Regulates phosphorylation of other AP-2 subunits as well as AP-2 localization and AP-2-mediated internalization of ligand complexes. Phosphorylates NUMB and regulates its cellular localization, promoting NUMB localization to endosomes. Binds to and stabilizes the activated form of NOTCH1, increases its localization in endosomes and regulates its transcriptional activity. In Rattus norvegicus (Rat), this protein is AP2-associated protein kinase 1 (Aak1).